The chain runs to 133 residues: Nucleoside diphosphate kinase (133 aa).

ATP contacts are provided by Lys9, Phe57, Arg85, Thr91, Arg102, and Asn112. Residue His115 is the Pros-phosphohistidine intermediate of the active site.

This sequence belongs to the NDK family. The cofactor is Mg(2+).

The protein resides in the cytoplasm. The enzyme catalyses a 2'-deoxyribonucleoside 5'-diphosphate + ATP = a 2'-deoxyribonucleoside 5'-triphosphate + ADP. It carries out the reaction a ribonucleoside 5'-diphosphate + ATP = a ribonucleoside 5'-triphosphate + ADP. Its function is as follows. Major role in the synthesis of nucleoside triphosphates other than ATP. The ATP gamma phosphate is transferred to the NDP beta phosphate via a ping-pong mechanism, using a phosphorylated active-site intermediate. This Methanococcus maripaludis (strain DSM 14266 / JCM 13030 / NBRC 101832 / S2 / LL) protein is Nucleoside diphosphate kinase.